Consider the following 833-residue polypeptide: Leucine--tRNA ligase (833 aa).

A 'HIGH' region motif is present at residues 41–52; the sequence is PYPSGAGLHVGH. Residues 610 to 614 carry the 'KMSKS' region motif; the sequence is KMSKS. Lysine 613 contacts ATP.

It belongs to the class-I aminoacyl-tRNA synthetase family.

Its subcellular location is the cytoplasm. It catalyses the reaction tRNA(Leu) + L-leucine + ATP = L-leucyl-tRNA(Leu) + AMP + diphosphate. This Streptococcus pyogenes serotype M3 (strain ATCC BAA-595 / MGAS315) protein is Leucine--tRNA ligase.